The following is a 564-amino-acid chain: Phomacin cluster regulator phmR (564 aa).

The segment at residues 33 to 64 (CDRCRGHKLRCIRDQMTVDSPCQRCRKAREKC) is a DNA-binding region (zn(2)-C6 fungal-type). Disordered regions lie at residues 68–93 (SSTRPVPARLNRSSQGHKLPGATSSA), 152–197 (DFAD…NPFL), and 252–278 (PIHPPTMASSHRTHSTASNDSSKDSTT). Composition is skewed to polar residues over residues 182–192 (ITPTSQGTTAV) and 258–278 (MASSHRTHSTASNDSSKDSTT).

Its subcellular location is the nucleus. Its function is as follows. Transcription factor that specifically regulates the expression of the gene cluster that mediates the biosynthesis of the mycotoxins phomacins, leucine-derived cytochalasans with potent actin polymerization-inhibitory activities and monocot-specific antigerminative activities. This Phaeosphaeria nodorum (strain SN15 / ATCC MYA-4574 / FGSC 10173) (Glume blotch fungus) protein is Phomacin cluster regulator phmR.